A 366-amino-acid polypeptide reads, in one-letter code: D-alanine--D-alanine ligase (366 aa).

Residues 140 to 346 form the ATP-grasp domain; the sequence is KALFAQSDLP…YGELLSRLVD (207 aa). 173–228 serves as a coordination point for ATP; that stretch reads EDRLGYPCFVKPANMGSSVGISKATNRAELVAAFDDAVRYDRKLIVEKGINVREIE. Residues aspartate 299, glutamate 313, and asparagine 315 each coordinate Mg(2+).

Belongs to the D-alanine--D-alanine ligase family. Mg(2+) is required as a cofactor. Mn(2+) serves as cofactor.

It localises to the cytoplasm. It carries out the reaction 2 D-alanine + ATP = D-alanyl-D-alanine + ADP + phosphate + H(+). It functions in the pathway cell wall biogenesis; peptidoglycan biosynthesis. Cell wall formation. This Heliobacterium modesticaldum (strain ATCC 51547 / Ice1) protein is D-alanine--D-alanine ligase.